A 415-amino-acid chain; its full sequence is Serine hydroxymethyltransferase (415 aa).

Residues Leu119 and 123–125 (GHL) contribute to the (6S)-5,6,7,8-tetrahydrofolate site. Lys228 is subject to N6-(pyridoxal phosphate)lysine. (6S)-5,6,7,8-tetrahydrofolate is bound at residue 353-355 (SAF).

This sequence belongs to the SHMT family. In terms of assembly, homodimer. It depends on pyridoxal 5'-phosphate as a cofactor.

It localises to the cytoplasm. The enzyme catalyses (6R)-5,10-methylene-5,6,7,8-tetrahydrofolate + glycine + H2O = (6S)-5,6,7,8-tetrahydrofolate + L-serine. The protein operates within one-carbon metabolism; tetrahydrofolate interconversion. Its pathway is amino-acid biosynthesis; glycine biosynthesis; glycine from L-serine: step 1/1. In terms of biological role, catalyzes the reversible interconversion of serine and glycine with tetrahydrofolate (THF) serving as the one-carbon carrier. Also exhibits THF-independent aldolase activity toward beta-hydroxyamino acids, producing glycine and aldehydes, via a retro-aldol mechanism. The sequence is that of Serine hydroxymethyltransferase from Haloarcula marismortui (strain ATCC 43049 / DSM 3752 / JCM 8966 / VKM B-1809) (Halobacterium marismortui).